The sequence spans 87 residues: Small ribosomal subunit protein uS17 (87 aa).

It belongs to the universal ribosomal protein uS17 family. As to quaternary structure, part of the 30S ribosomal subunit.

In terms of biological role, one of the primary rRNA binding proteins, it binds specifically to the 5'-end of 16S ribosomal RNA. This chain is Small ribosomal subunit protein uS17, found in Onion yellows phytoplasma (strain OY-M).